A 371-amino-acid polypeptide reads, in one-letter code: Chorismate synthase (371 aa).

2 residues coordinate NADP(+): Arg48 and Arg54. Residues 125–127 (RSS), 238–239 (NA), Gly278, 293–297 (KPTSS), and Arg319 each bind FMN.

Belongs to the chorismate synthase family. As to quaternary structure, homotetramer. Requires FMNH2 as cofactor.

It carries out the reaction 5-O-(1-carboxyvinyl)-3-phosphoshikimate = chorismate + phosphate. The protein operates within metabolic intermediate biosynthesis; chorismate biosynthesis; chorismate from D-erythrose 4-phosphate and phosphoenolpyruvate: step 7/7. In terms of biological role, catalyzes the anti-1,4-elimination of the C-3 phosphate and the C-6 proR hydrogen from 5-enolpyruvylshikimate-3-phosphate (EPSP) to yield chorismate, which is the branch point compound that serves as the starting substrate for the three terminal pathways of aromatic amino acid biosynthesis. This reaction introduces a second double bond into the aromatic ring system. This is Chorismate synthase from Polynucleobacter asymbioticus (strain DSM 18221 / CIP 109841 / QLW-P1DMWA-1) (Polynucleobacter necessarius subsp. asymbioticus).